The following is a 738-amino-acid chain: Ethylene receptor (738 aa).

3 consecutive transmembrane segments (helical) span residues 23 to 43, 54 to 74, and 92 to 112; these read ISDF…IYFV, VLVQ…INLW, and VLTA…IPDL. The Cu cation site is built by Cys-65 and His-69. Residues 158–307 enclose the GAF domain; the sequence is DRHTILKTTL…VVADQVAVAL (150 aa). The Histidine kinase domain maps to 350-589; the sequence is VMNHEMRTPM…IFIVKLGFAE (240 aa). A Phosphohistidine; by autocatalysis modification is found at His-353. In terms of domain architecture, Response regulatory spans 612–729; the sequence is PGLKVLVMDD…KMRSVLSELL (118 aa). Asp-660 is modified (4-aspartylphosphate).

This sequence belongs to the ethylene receptor family. In terms of assembly, homodimer; disulfide-linked. Cu cation serves as cofactor. In terms of processing, activation probably requires a transfer of a phosphate group between a His in the transmitter domain and an Asp of the receiver domain.

It localises to the endoplasmic reticulum membrane. It catalyses the reaction ATP + protein L-histidine = ADP + protein N-phospho-L-histidine.. Functionally, may act early in the ethylene signal transduction pathway, possibly as an ethylene receptor, or as a regulator of the pathway. The chain is Ethylene receptor (ETR1) from Prunus persica (Peach).